A 28-amino-acid polypeptide reads, in one-letter code: Toxin a (28 aa).

The LCN-type CS-alpha/beta domain maps to 3 to 28 (VPGNYPLDSYGNCYPCTILGDNQYCI).

The protein belongs to the long (3 C-C) scorpion toxin superfamily. As to expression, expressed by the venom gland.

Its subcellular location is the secreted. Its function is as follows. Binds to sodium channels (Nav) and affects the channel activation process. The polypeptide is Toxin a (Androctonus crassicauda (Arabian fat-tailed scorpion)).